A 512-amino-acid chain; its full sequence is Maturase K (512 aa).

Belongs to the intron maturase 2 family. MatK subfamily.

Its subcellular location is the plastid. It localises to the chloroplast. Its function is as follows. Usually encoded in the trnK tRNA gene intron. Probably assists in splicing its own and other chloroplast group II introns. The chain is Maturase K from Lemna minuta (Least duckweed).